Here is a 440-residue protein sequence, read N- to C-terminus: D-serine dehydratase (440 aa).

Lys116 carries the N6-(pyridoxal phosphate)lysine modification.

It belongs to the serine/threonine dehydratase family. DsdA subfamily. Monomer. Requires pyridoxal 5'-phosphate as cofactor.

The catalysed reaction is D-serine = pyruvate + NH4(+). This chain is D-serine dehydratase, found in Salmonella enteritidis PT4 (strain P125109).